A 125-amino-acid polypeptide reads, in one-letter code: Holo-[acyl-carrier-protein] synthase (125 aa).

Residues D8 and E55 each contribute to the Mg(2+) site.

This sequence belongs to the P-Pant transferase superfamily. AcpS family. The cofactor is Mg(2+).

Its subcellular location is the cytoplasm. It catalyses the reaction apo-[ACP] + CoA = holo-[ACP] + adenosine 3',5'-bisphosphate + H(+). Functionally, transfers the 4'-phosphopantetheine moiety from coenzyme A to a Ser of acyl-carrier-protein. The chain is Holo-[acyl-carrier-protein] synthase from Treponema pallidum (strain Nichols).